We begin with the raw amino-acid sequence, 234 residues long: Acetylxylan esterase 2 (234 aa).

Positions 1–17 (MHSKFFAASLLGLGAAA) are cleaved as a signal peptide. Residues 18 to 27 (IPLEGVMEKR) constitute a propeptide that is removed on maturation. Cystine bridges form between Cys29–Cys106 and Cys73–Cys79. Ser117 is an active-site residue. 3 disulfide bridges follow: Cys128/Cys188, Cys174/Cys206, and Cys198/Cys205. Residue Asp202 is part of the active site. Asn207 carries N-linked (GlcNAc...) asparagine glycosylation. His214 is a catalytic residue.

Belongs to the cutinase family. Acetylxylan esterase subfamily. Monomer.

It localises to the secreted. It carries out the reaction Deacetylation of xylans and xylo-oligosaccharides.. It participates in glycan degradation; xylan degradation. Its function is as follows. Degrades acetylated xylans by cleaving acetyl side groups from the hetero-xylan backbone. This Talaromyces purpureogenus (Soft rot fungus) protein is Acetylxylan esterase 2 (axe-2).